The chain runs to 52 residues: DNA import protein CedA2 (52 aa).

A run of 2 helical transmembrane segments spans residues 1 to 21 (MKSYLLVSMLLLLNSILVYIY) and 27 to 47 (ILVSGITVAVIIYIVVKIIFE).

In terms of assembly, forms a complex composed of CedA, CedA1 and CedA2.

The protein localises to the cell membrane. In terms of biological role, part of the Ced system, which is involved in DNA import. The protein is DNA import protein CedA2 of Sulfolobus acidocaldarius (strain ATCC 33909 / DSM 639 / JCM 8929 / NBRC 15157 / NCIMB 11770).